The primary structure comprises 272 residues: Probable ribonuclease HI_0526 (272 aa).

Residues 1 to 23 form the signal peptide; that stretch reads MKKLTSILSLIVLVILAIWQYFT. Active-site residues include H148, E195, and H199.

This sequence belongs to the RNase T2 family.

The protein is Probable ribonuclease HI_0526 of Haemophilus influenzae (strain ATCC 51907 / DSM 11121 / KW20 / Rd).